Consider the following 120-residue polypeptide: NAD(P)H-quinone oxidoreductase subunit 3, chloroplastic (120 aa).

3 consecutive transmembrane segments (helical) span residues 9-29 (IFWA…FISG), 64-84 (MFAL…PWAM), and 88-108 (VLGV…ILGL).

This sequence belongs to the complex I subunit 3 family. As to quaternary structure, NDH is composed of at least 16 different subunits, 5 of which are encoded in the nucleus.

The protein resides in the plastid. It is found in the chloroplast thylakoid membrane. It catalyses the reaction a plastoquinone + NADH + (n+1) H(+)(in) = a plastoquinol + NAD(+) + n H(+)(out). The enzyme catalyses a plastoquinone + NADPH + (n+1) H(+)(in) = a plastoquinol + NADP(+) + n H(+)(out). Its function is as follows. NDH shuttles electrons from NAD(P)H:plastoquinone, via FMN and iron-sulfur (Fe-S) centers, to quinones in the photosynthetic chain and possibly in a chloroplast respiratory chain. The immediate electron acceptor for the enzyme in this species is believed to be plastoquinone. Couples the redox reaction to proton translocation, and thus conserves the redox energy in a proton gradient. The polypeptide is NAD(P)H-quinone oxidoreductase subunit 3, chloroplastic (Barbarea verna (Land cress)).